We begin with the raw amino-acid sequence, 101 residues long: Putative septation protein SpoVG (101 aa).

Belongs to the SpoVG family.

Its function is as follows. Could be involved in septation. The chain is Putative septation protein SpoVG from Staphylococcus saprophyticus subsp. saprophyticus (strain ATCC 15305 / DSM 20229 / NCIMB 8711 / NCTC 7292 / S-41).